We begin with the raw amino-acid sequence, 81 residues long: Ferredoxin (81 aa).

Residues 2–30 (KYTIVDKETCIACGACGAAAPDIYDYDED) form the 4Fe-4S ferredoxin-type domain. [4Fe-4S] cluster-binding residues include Cys-11, Cys-14, Cys-17, and Cys-61.

It depends on [4Fe-4S] cluster as a cofactor.

In terms of biological role, ferredoxins are iron-sulfur proteins that transfer electrons in a wide variety of metabolic reactions. This is Ferredoxin from Bacillus thermoproteolyticus.